Reading from the N-terminus, the 553-residue chain is Efflux pump alnA (553 aa).

Over residues 1–21 (MSSDDTVKQEHSCSADSEKQD) the composition is skewed to basic and acidic residues. The interval 1–36 (MSSDDTVKQEHSCSADSEKQDSSCASDNEQPKEPQS) is disordered. A run of 13 helical transmembrane segments spans residues 40 to 60 (IHGL…FLFA), 85 to 105 (WSGV…LQIF), 110 to 130 (IKWM…ICGA), 136 to 156 (MLIG…VGVM), 174 to 194 (AMGL…GAFT), 202 to 222 (WSFY…IFLL), 243 to 263 (LVGT…INFA), 270 to 290 (SEPG…VFGI), 319 to 339 (LLFV…YVIP), 355 to 375 (VRLL…GYLA), 382 to 402 (IPWY…MYTI), 413 to 433 (GYSS…HAVA), and 522 to 542 (TYIL…GMKW).

It belongs to the major facilitator superfamily. TCR/Tet family.

The protein localises to the cell membrane. In terms of biological role, efflux pump; part of the gene cluster that mediates the biosynthesis of asperlin, a polyketide showing anti-inflammatory, antitumor and antibiotic activities. Is probably involved in the efflux of asperlin. The protein is Efflux pump alnA of Emericella nidulans (strain FGSC A4 / ATCC 38163 / CBS 112.46 / NRRL 194 / M139) (Aspergillus nidulans).